The sequence spans 874 residues: Adhesion G-protein coupled receptor D1 (874 aa).

The first 25 residues, 1 to 25, serve as a signal peptide directing secretion; that stretch reads MEKLLRLCCWYSWLLLFYYNFQVRG. The Extracellular portion of the chain corresponds to 26 to 567; it reads VYSRSQDHPG…LARGHQVALS (542 aa). Residues 79 to 276 form the Pentraxin (PTX) domain; that stretch reads KGVTLLYYGR…ASPVMPTDAY (198 aa). Residues Asn-90, Asn-185, Asn-282, Asn-302, Asn-319, Asn-394, Asn-476, Asn-501, and Asn-533 are each glycosylated (N-linked (GlcNAc...) asparagine). A GAIN-B domain is found at 371 to 557; that stretch reads QVTVEGSSAM…AILMQVVPLE (187 aa). Intrachain disulfides connect Cys-510–Cys-539 and Cys-527–Cys-541. The segment at 510–557 is GPS; it reads CAFLDFSSGEGVWSNHGCALTRGNLTYSVCRCTHLTNFAILMQVVPLE. Residues 546 to 554 form a stachel region; it reads NFAILMQVV. Residue Gln-563 participates in 17beta-hydroxy-5alpha-androstan-3-one binding. A helical membrane pass occupies residues 568-590; the sequence is SISYVGCSLSVLCLVATLVTFAV. Over 591-601 the chain is Cytoplasmic; it reads LSSVSTIRNQR. The helical transmembrane segment at 602 to 623 threads the bilayer; that stretch reads YHIHANLSFAVLVAQVLLLISF. Residues 624–632 lie on the Extracellular side of the membrane; the sequence is RLEPGTTPC. An intrachain disulfide couples Cys-632 to Cys-704. A helical membrane pass occupies residues 633–655; it reads QVMAVLLHYFFLSAFAWMLVEGL. Residues 656–673 lie on the Cytoplasmic side of the membrane; sequence HLYSMVIKVFGSEDSKHR. A helical membrane pass occupies residues 674 to 695; sequence YYYGMGWGFPLLICIISLSFAM. At 696–710 the chain is on the extracellular side; sequence DSYGTSNNCWLSLAS. A helical membrane pass occupies residues 711-732; that stretch reads GAIWAFVAPALFVIVVNIGILI. Topologically, residues 733–757 are cytoplasmic; that stretch reads AVTRVISQISADNYKIHGDPSAFKL. Residues 758–780 traverse the membrane as a helical segment; it reads TAKAVAVLLPILGTSWVFGVLAV. The Extracellular segment spans residues 781–783; the sequence is NGC. The chain crosses the membrane as a helical span at residues 784–810; that stretch reads AVVFQYMFATLNSLQGLFIFLFHCLLN. A 17beta-hydroxy-5alpha-androstan-3-one-binding site is contributed by Asn-795. At 811-874 the chain is on the cytoplasmic side; the sequence is SEVRAAFKHK…SAHRVDLSAV (64 aa). A disordered region spans residues 854–874; sequence TKLSPWDKSSHSAHRVDLSAV. Residues 861–874 are compositionally biased toward basic and acidic residues; it reads KSSHSAHRVDLSAV.

Belongs to the G-protein coupled receptor 2 family. Adhesion G-protein coupled receptor (ADGR) subfamily. As to quaternary structure, heterodimer of 2 chains generated by proteolytic processing; the large extracellular N-terminal fragment and the membrane-bound C-terminal fragment predominantly remain associated and non-covalently linked. Interacts with ESYT1; interaction takes place in absence of cytosolic calcium and inhibits the G protein-coupled receptor activity of ADGRD1. Autoproteolytically processed at the GPS region of the GAIN-B domain; this cleavage modulates receptor activity. Cleavage takes place early in the secretory pathway before N-glycosylation. Up-regulated in CD133(+) cell population of glioblastoma.

The protein localises to the cell membrane. With respect to regulation, forms a heterodimer of 2 chains generated by proteolytic processing that remain associated through non-covalent interactions mediated by the GAIN-B domain. In the inactivated receptor, the Stachel sequence (also named stalk) is embedded in the GAIN-B domain, where it adopts a beta-strand conformation. On activation, the Stachel moves into the 7 transmembrane region and adopts a twisted hook-shaped configuration that forms contacts within the receptor, leading to coupling of a G-alpha protein, which activates signaling. The cleaved GAIN-B and N-terminal domains can then dissociate from the rest of the receptor. Interaction with ESYT1 in absence of cytosolic calcium inhibits the G protein-coupled receptor activity; interaction and inhibition is relieved when cytosolic calcium increases. Activated by AP503, a small molecule that activates ADGRD1 without activating androgen nuclear receptors: AP503 enhances muscle strength without eliciting androgenic adverse effects. Activated by the 8E3E8 antibody that targets the N-terminus. Functionally, adhesion G-protein coupled receptor (aGPCR) for androgen hormone 5alpha-dihydrotestosterone (5alpha-DHT), also named 17beta-hydroxy-5alpha-androstan-3-one, the most potent hormone among androgens. Also activated by methenolone drug. Ligand binding causes a conformation change that triggers signaling via guanine nucleotide-binding proteins (G proteins) and modulates the activity of downstream effectors, such as adenylate cyclase. ADGRD1 is coupled to G(s) G proteins and mediates activation of adenylate cyclase activity. Acts as a 5alpha-DHT receptor in muscle cells, thereby increasing intracellular cyclic AMP (cAMP) levels and enhancing muscle strength. This chain is Adhesion G-protein coupled receptor D1, found in Homo sapiens (Human).